The sequence spans 205 residues: Beta-crystallin B2 (205 aa).

The residue at position 2 (Ala-2) is an N-acetylalanine. Residues Ala-2–Asn-16 are N-terminal arm. Beta/gamma crystallin 'Greek key' domains follow at residues Pro-17–Ala-56 and Gly-57–Lys-101. Residues Val-102–Glu-106 form a connecting peptide region. 2 Beta/gamma crystallin 'Greek key' domains span residues His-107 to Ser-148 and Gly-149 to Arg-191. Positions Met-193–Asn-205 are C-terminal arm.

It belongs to the beta/gamma-crystallin family. Homo/heterodimer, or complexes of higher-order. The structure of beta-crystallin oligomers seems to be stabilized through interactions between the N-terminal arms.

Its function is as follows. Crystallins are the dominant structural components of the vertebrate eye lens. The polypeptide is Beta-crystallin B2 (CRYBB2) (Canis lupus familiaris (Dog)).